The sequence spans 589 residues: Complement component C8 beta chain (589 aa).

A signal peptide spans 1 to 31; sequence MKIGAQVWRALAKSCLLCATLGCLHFPGSRG. The propeptide occupies 32 to 53; it reads GKPDFFETKAVNGSLVKSRPVR. The N-linked (GlcNAc...) asparagine glycan is linked to Asn43. The region spanning 63 to 116 is the TSP type-1 1 domain; it reads DCELSTWSSWTACDPCQKKRYRHTYLLRPSQFYGELCDLSDKEVEDCVTNQPCR. 7 disulfides stabilise this stretch: Cys64-Cys99, Cys75-Cys109, Cys78-Cys115, Cys121-Cys132, Cys126-Cys145, Cys139-Cys154, and Cys161-Cys199. C-linked (Man) tryptophan glycosylation is found at Trp69 and Trp72. Positions 120–155 constitute an LDL-receptor class A domain; the sequence is RCEGFVCAQTGRCVNRRLLCNGDNDCGDQSDEANCR. 6 residues coordinate Ca(2+): Leu137, Asn140, Asp142, Asp144, Asp150, and Glu151. The 347-residue stretch at 157–503 folds into the MACPF domain; that stretch reads IYKNCQREME…EFQSEVSSCR (347 aa). The next 8 beta stranded transmembrane spans lie at 201–206, 209–213, 251–258, 261–268, 328–335, 338–343, 378–385, and 391–398; these read PHYILD, FRKPY, FNFTSGFK, GVMDLGIK, SYGEYRDL, DFGTHF, AGGSFGIG, and VYVKVGVS. Cysteines 377 and 402 form a disulfide. Positions 404-534 constitute an EGF-like domain; the sequence is DIMKEINERN…PGGFQGTACE (131 aa). Thr417 carries the post-translational modification Phosphothreonine. Disulfide bonds link Cys502–Cys549, Cys504–Cys520, Cys507–Cys522, and Cys524–Cys533. Positions 544-587 constitute a TSP type-1 2 domain; that stretch reads DGKWSCWSDWSACSGGHKTRHRQCNNPAPHKGGSPCSGPASETL. 2 C-linked (Man) tryptophan glycosylation sites follow: Trp550 and Trp553. Cys556 and Cys589 are oxidised to a cystine. Residues 570–589 are disordered; sequence PAPHKGGSPCSGPASETLNC.

Belongs to the complement C6/C7/C8/C9 family. Heterotrimer of 3 chains: alpha (C8A), beta (C8B) and gamma (C8G); the alpha and gamma chains are disulfide bonded. Component of the membrane attack complex (MAC), composed of complement C5b, C6, C7, C8A, C8B, C8G and multiple copies of the pore-forming subunit C9. Post-translationally, N-glycosylated; contains one or two bound glycans. Not O-glycosylated.

The protein resides in the secreted. Its subcellular location is the target cell membrane. Membrane attack complex (MAC) assembly is inhibited by CD59, thereby protecting self-cells from damage during complement activation. CD59 acts by binding to the beta-haipins of C8 (C8A and C8B), forming an intermolecular beta-sheet that prevents incorporation of the multiple copies of C9 required for complete formation of the osmolytic pore. MAC assembly is also inhibited by clusterin (CLU) chaperones that inhibit polymerization of C9. Component of the membrane attack complex (MAC), a multiprotein complex activated by the complement cascade, which inserts into a target cell membrane and forms a pore, leading to target cell membrane rupture and cell lysis. The MAC is initiated by proteolytic cleavage of C5 into complement C5b in response to the classical, alternative, lectin and GZMK complement pathways. The complement pathways consist in a cascade of proteins that leads to phagocytosis and breakdown of pathogens and signaling that strengthens the adaptive immune system. C8B, together with C8A and C8G, inserts into the target membrane, but does not form pores by itself. During MAC assembly, associates with C5b, C6 and C7 to form the C5b8 intermediate complex that inserts into the target membrane and traverses the bilayer increasing membrane rigidity. The protein is Complement component C8 beta chain (C8b) of Mus musculus (Mouse).